The chain runs to 159 residues: 6,7-dimethyl-8-ribityllumazine synthase (159 aa).

Residues Trp30, 64–66 (TFE), and 88–90 (CVI) each bind 5-amino-6-(D-ribitylamino)uracil. A (2S)-2-hydroxy-3-oxobutyl phosphate-binding site is contributed by 93–94 (ET). The active-site Proton donor is the His96. Residue Phe121 participates in 5-amino-6-(D-ribitylamino)uracil binding. Arg135 serves as a coordination point for (2S)-2-hydroxy-3-oxobutyl phosphate.

Belongs to the DMRL synthase family.

The enzyme catalyses (2S)-2-hydroxy-3-oxobutyl phosphate + 5-amino-6-(D-ribitylamino)uracil = 6,7-dimethyl-8-(1-D-ribityl)lumazine + phosphate + 2 H2O + H(+). The protein operates within cofactor biosynthesis; riboflavin biosynthesis; riboflavin from 2-hydroxy-3-oxobutyl phosphate and 5-amino-6-(D-ribitylamino)uracil: step 1/2. In terms of biological role, catalyzes the formation of 6,7-dimethyl-8-ribityllumazine by condensation of 5-amino-6-(D-ribitylamino)uracil with 3,4-dihydroxy-2-butanone 4-phosphate. This is the penultimate step in the biosynthesis of riboflavin. This chain is 6,7-dimethyl-8-ribityllumazine synthase, found in Cytophaga hutchinsonii (strain ATCC 33406 / DSM 1761 / CIP 103989 / NBRC 15051 / NCIMB 9469 / D465).